The chain runs to 330 residues: Mycothiol acetyltransferase (330 aa).

2 consecutive N-acetyltransferase domains span residues 5–142 and 171–328; these read LVTD…MPLR and VRLR…APRP. Glu36 is a 1D-myo-inositol 2-(L-cysteinylamino)-2-deoxy-alpha-D-glucopyranoside binding site. 80–82 contacts acetyl-CoA; it reads VVV. The disordered stretch occupies residues 142 to 161; that stretch reads RDIAGDEPGGPWEAPELPEP. The 1D-myo-inositol 2-(L-cysteinylamino)-2-deoxy-alpha-D-glucopyranoside site is built by Glu198, Lys238, and Glu254. Residues 258–260 and 265–271 each bind acetyl-CoA; these read VGV and QGSGLGR. A 1D-myo-inositol 2-(L-cysteinylamino)-2-deoxy-alpha-D-glucopyranoside-binding site is contributed by Tyr292. 297–302 serves as a coordination point for acetyl-CoA; the sequence is NEAAVR.

The protein belongs to the acetyltransferase family. MshD subfamily. In terms of assembly, monomer.

It carries out the reaction 1D-myo-inositol 2-(L-cysteinylamino)-2-deoxy-alpha-D-glucopyranoside + acetyl-CoA = mycothiol + CoA + H(+). Its function is as follows. Catalyzes the transfer of acetyl from acetyl-CoA to desacetylmycothiol (Cys-GlcN-Ins) to form mycothiol. The chain is Mycothiol acetyltransferase from Nocardiopsis dassonvillei (strain ATCC 23218 / DSM 43111 / CIP 107115 / JCM 7437 / KCTC 9190 / NBRC 14626 / NCTC 10488 / NRRL B-5397 / IMRU 509) (Actinomadura dassonvillei).